We begin with the raw amino-acid sequence, 486 residues long: Glutamyl-tRNA(Gln) amidotransferase subunit A (486 aa).

Catalysis depends on charge relay system residues Lys76 and Ser151. Catalysis depends on Ser175, which acts as the Acyl-ester intermediate.

Belongs to the amidase family. GatA subfamily. As to quaternary structure, heterotrimer of A, B and C subunits.

It catalyses the reaction L-glutamyl-tRNA(Gln) + L-glutamine + ATP + H2O = L-glutaminyl-tRNA(Gln) + L-glutamate + ADP + phosphate + H(+). Functionally, allows the formation of correctly charged Gln-tRNA(Gln) through the transamidation of misacylated Glu-tRNA(Gln) in organisms which lack glutaminyl-tRNA synthetase. The reaction takes place in the presence of glutamine and ATP through an activated gamma-phospho-Glu-tRNA(Gln). The sequence is that of Glutamyl-tRNA(Gln) amidotransferase subunit A from Marinomonas sp. (strain MWYL1).